A 354-amino-acid polypeptide reads, in one-letter code: Guanine nucleotide-binding protein G(o) subunit alpha (354 aa).

A lipid anchor (N-myristoyl glycine) is attached at glycine 2. Cysteine 3 carries S-palmitoyl cysteine lipidation. The G-alpha domain maps to 32–354 (KDVKLLLLGA…ANNLRGCGLY (323 aa)). The tract at residues 35–48 (KLLLLGAGESGKST) is G1 motif. Glutamate 43, lysine 46, serine 47, threonine 48, serine 152, leucine 176, arginine 177, threonine 178, and arginine 179 together coordinate GTP. A Mg(2+)-binding site is contributed by serine 47. A G2 motif region spans residues 174-182 (DILRTRVKT). Arginine 179 carries the ADP-ribosylarginine; by cholera toxin modification. Residue threonine 182 coordinates Mg(2+). The tract at residues 197 to 206 (FRLFDVGGQR) is G3 motif. The residue at position 205 (glutamine 205) is a 5-glutamyl histamine. The G4 motif stretch occupies residues 266 to 273 (ILFLNKKD). Residues asparagine 270, aspartate 273, and cysteine 325 each coordinate GTP. A G5 motif region spans residues 324–329 (TCATDT). Residue cysteine 351 is the site of S-palmitoyl cysteine attachment. Cysteine 351 bears the ADP-ribosylcysteine; by pertussis toxin mark.

Belongs to the G-alpha family. G(i/o/t/z) subfamily. G proteins are composed of 3 units; alpha, beta and gamma. The alpha chain contains the guanine nucleotide binding site. Forms a complex with GNB1 and GNG3. Interacts with RGS14. Interacts with RGS16. Interacts with RGS19. Interacts (when palmitoylated) with ADGRG3. Post-translationally, histaminylated at Gln-205 residues by TGM2. In terms of processing, palmitoylated at Cys-351, leading to binding to ADGRG3.

The protein localises to the cell membrane. It is found in the membrane. The enzyme catalyses GTP + H2O = GDP + phosphate + H(+). The GTPase activity is promoted by GTPAse activators, such as RGS14, RGS16 and RGS19. Guanine nucleotide-binding proteins (G proteins) function as transducers downstream of G protein-coupled receptors (GPCRs) in numerous signaling cascades. The alpha chain contains the guanine nucleotide binding site and alternates between an active, GTP-bound state and an inactive, GDP-bound state. Signaling by an activated GPCR promotes GDP release and GTP binding. The alpha subunit has a low GTPase activity that converts bound GTP to GDP, thereby terminating the signal. Both GDP release and GTP hydrolysis are modulated by numerous regulatory proteins. Signaling is mediated via effector proteins, such as adenylate cyclase. Inhibits adenylate cyclase activity, leading to decreased intracellular cAMP levels. The protein is Guanine nucleotide-binding protein G(o) subunit alpha (GNAO1) of Homo sapiens (Human).